Reading from the N-terminus, the 532-residue chain is Monolignol oxidoreductase AtBBE-like 15 (532 aa).

Residues 1 to 27 (MAFAISKRNATLFLVTLLLISVPLSSS) form the signal peptide. A disulfide bridge connects residues cysteine 36 and cysteine 100. A glycan (N-linked (GlcNAc...) asparagine) is linked at asparagine 57. The FAD-binding PCMH-type domain occupies 76 to 254 (TPSNPKPVFI…LAWKIKLVPV (179 aa)). The segment at residues 115–179 (HDYEGLSFVA…QTHGFPAGLC (65 aa)) is a cross-link (6-(S-cysteinyl)-8alpha-(pros-histidyl)-FAD (His-Cys)). N-linked (GlcNAc...) asparagine glycans are attached at residues asparagine 306 and asparagine 431.

It belongs to the oxygen-dependent FAD-linked oxidoreductase family. FAD is required as a cofactor. The FAD cofactor is bound via a bicovalent 6-S-cysteinyl, 8alpha-N1-histidyl FAD linkage. As to expression, expressed in sepals and stamen.

The protein localises to the secreted. It localises to the cell wall. The enzyme catalyses (E)-4-coumaroyl alcohol + A = (E)-4-coumaraldehyde + AH2. It carries out the reaction (E)-coniferol + A = (E)-coniferaldehyde + AH2. It catalyses the reaction (E)-sinapyl alcohol + A = (E)-sinapaldehyde + AH2. The catalysed reaction is 4-O-(beta-D-glucosyl)-(E)-coniferol + A = 4-O-(beta-D-glucosyl)-4-(E)-coniferyl aldehyde + AH2. Required for endosperm development and polar nuclei fusion. Mediates oxidation of p-hydroxylated derivatives of cinnamyl alcohol (i.e. the monolignols p-coumaryl-, coniferyl-, and sinapyl alcohol) to their corresponding aldehydes. Can also use the beta-O-glycosylated form of coniferyl alcohol (coniferin) as substrate, but is much less efficient towards cinnamyl alcohol. The electron acceptor required for these reactions is not known, but does not seem to be dioxygen. The sequence is that of Monolignol oxidoreductase AtBBE-like 15 from Arabidopsis thaliana (Mouse-ear cress).